Here is a 449-residue protein sequence, read N- to C-terminus: tRNA modification GTPase MnmE (449 aa).

(6S)-5-formyl-5,6,7,8-tetrahydrofolate is bound by residues arginine 24, glutamate 85, and arginine 124. A TrmE-type G domain is found at glycine 220–serine 369. A K(+)-binding site is contributed by asparagine 230. Residues asparagine 230 to serine 235, serine 249 to threonine 255, and aspartate 274 to glycine 277 contribute to the GTP site. Serine 234 contacts Mg(2+). 3 residues coordinate K(+): serine 249, isoleucine 251, and threonine 254. Threonine 255 is a binding site for Mg(2+). Lysine 449 is a (6S)-5-formyl-5,6,7,8-tetrahydrofolate binding site.

Belongs to the TRAFAC class TrmE-Era-EngA-EngB-Septin-like GTPase superfamily. TrmE GTPase family. Homodimer. Heterotetramer of two MnmE and two MnmG subunits. K(+) serves as cofactor.

The protein localises to the cytoplasm. Exhibits a very high intrinsic GTPase hydrolysis rate. Involved in the addition of a carboxymethylaminomethyl (cmnm) group at the wobble position (U34) of certain tRNAs, forming tRNA-cmnm(5)s(2)U34. The chain is tRNA modification GTPase MnmE from Akkermansia muciniphila (strain ATCC BAA-835 / DSM 22959 / JCM 33894 / BCRC 81048 / CCUG 64013 / CIP 107961 / Muc).